Here is a 488-residue protein sequence, read N- to C-terminus: Dipeptidase 3 (488 aa).

The first 35 residues, 1 to 35 (MQPTGPEGPRALSLRPLGHRLSLLGVLLIIPSLWV), serve as a signal peptide directing secretion. Residues 41–60 (TPSLSSAPTSPGASSAMTTP) show a composition bias toward low complexity. Residues 41–74 (TPSLSSAPTSPGASSAMTTPGIPNDTTTSGVTSD) are disordered. Disulfide bonds link C143–C222 and C294–C326. N-linked (GlcNAc...) asparagine glycosylation occurs at N331. Residue S459 is the site of GPI-anchor amidated serine attachment. Residues 460–487 (KAPPCPLLGLVAAVTSPAFTLWLCCSGH) constitute a propeptide, removed in mature form.

It belongs to the metallo-dependent hydrolases superfamily. Peptidase M19 family. As to quaternary structure, homodimer; disulfide-linked. Interacts with TEX101; co-localized on the cell surface of spermatocytes, spermatids, and testicular spermatozoa, co-localized only in cytoplasmic droplets of caput and corpus epididymal sperm.

The protein resides in the membrane. Its function is as follows. Lacks dipeptidase activity and is unable to hydrolyze cystinyl-bis-glycine, leukotriene D4 and the beta-lactam antibiotic imipenem. The absence of activity may be due to the inability of serine (instead of aspartate found in DPEP1/2) at position 356 to function as the acid/base catalyst and activate the nucleophilic water/hydroxide. The sequence is that of Dipeptidase 3 (Dpep3) from Rattus norvegicus (Rat).